The sequence spans 344 residues: tRNA N6-adenosine threonylcarbamoyltransferase (344 aa).

His115 and His119 together coordinate Fe cation. Substrate-binding positions include 137–141, Asp170, Gly183, Asp187, and Asn276; that span reads LVSGG. Asp306 is a binding site for Fe cation.

It belongs to the KAE1 / TsaD family. Requires Fe(2+) as cofactor.

Its subcellular location is the cytoplasm. The catalysed reaction is L-threonylcarbamoyladenylate + adenosine(37) in tRNA = N(6)-L-threonylcarbamoyladenosine(37) in tRNA + AMP + H(+). In terms of biological role, required for the formation of a threonylcarbamoyl group on adenosine at position 37 (t(6)A37) in tRNAs that read codons beginning with adenine. Is involved in the transfer of the threonylcarbamoyl moiety of threonylcarbamoyl-AMP (TC-AMP) to the N6 group of A37, together with TsaE and TsaB. TsaD likely plays a direct catalytic role in this reaction. The sequence is that of tRNA N6-adenosine threonylcarbamoyltransferase from Limosilactobacillus fermentum (strain NBRC 3956 / LMG 18251) (Lactobacillus fermentum).